We begin with the raw amino-acid sequence, 93 residues long: Acylphosphatase (93 aa).

Residues 6-93 (RARIVVSGRV…GDLGAFEIRF (88 aa)) enclose the Acylphosphatase-like domain. Catalysis depends on residues arginine 21 and asparagine 39.

Belongs to the acylphosphatase family.

The catalysed reaction is an acyl phosphate + H2O = a carboxylate + phosphate + H(+). This chain is Acylphosphatase (acyP), found in Anaeromyxobacter dehalogenans (strain 2CP-C).